Reading from the N-terminus, the 406-residue chain is Cysteine desulfurase IscS (406 aa).

Pyridoxal 5'-phosphate contacts are provided by residues 75–76, asparagine 155, glutamine 183, and 203–205; these read AT and SSH. At lysine 206 the chain carries N6-(pyridoxal phosphate)lysine. Threonine 243 provides a ligand contact to pyridoxal 5'-phosphate. Catalysis depends on cysteine 330, which acts as the Cysteine persulfide intermediate. Cysteine 330 lines the [2Fe-2S] cluster pocket.

This sequence belongs to the class-V pyridoxal-phosphate-dependent aminotransferase family. NifS/IscS subfamily. In terms of assembly, homodimer. Forms a heterotetramer with IscU, interacts with other sulfur acceptors. Pyridoxal 5'-phosphate is required as a cofactor.

It localises to the cytoplasm. The enzyme catalyses (sulfur carrier)-H + L-cysteine = (sulfur carrier)-SH + L-alanine. It functions in the pathway cofactor biosynthesis; iron-sulfur cluster biosynthesis. In terms of biological role, master enzyme that delivers sulfur to a number of partners involved in Fe-S cluster assembly, tRNA modification or cofactor biosynthesis. Catalyzes the removal of elemental sulfur atoms from cysteine to produce alanine. Functions as a sulfur delivery protein for Fe-S cluster synthesis onto IscU, an Fe-S scaffold assembly protein, as well as other S acceptor proteins. In Haemophilus ducreyi (strain 35000HP / ATCC 700724), this protein is Cysteine desulfurase IscS.